We begin with the raw amino-acid sequence, 1205 residues long: MTNPPGQSVSANTVAESHEGEFGCTLMDLRKLMELRGADAVAQISAHYGGVQEICTRLKTSPIEGLSGNPADLEKRRLVFGKNVIPPKRPKTFLELVWEALQDVTLIILEIAAIISLVLSFYRPPGGDNEICGHIASSPEEEEEGETGWIEGAAILASVIIVVLVTAFNDWSKEKQFRGLQSRIELEQKFSIIRNGQLIQLPVAEIVVGDIAQIKYGDLLPADGILIQGNDLKIDESSLTGESDHVKKTLDKDPMLLSGTHVMEGSGRMVVTAVGVNSQTGIIFTLLGASEEEDDDDKKKKGKKQGAPENRNKAKTQDGVALEIQPLNSQEGLDSEDKEKKIARIPKKEKSVLQGKLTRLAVQIGKAGLIMSVLTVVILILYFVVDNFVIQRREWLPECTPVYIQYFVKFFIIGVTVLVVAVPEGLPLAVTISLAYSVKKMMKDNNLVRHLDACETMGNATAICSDKTGTLTMNRMTVVQAYIGGTHYRQIPQPDVFPPKVLELIVNGISINCAYTSKIQPPEKEGGLPRQVGNKTECGLLGFVTDLKQDYQAVRNEVPEEKLFKVYTFNSVRKSMSTVIRKPEGGFRMFSKGASEIMLRRCDRILNKEGEIKSFRSKDRDNMVRNVIEPMASEGLRTICLAYRDFDGTEPSWDIEGEILTSLICIAVVGIEDPVRPEVPDAIAKCKRAGITVRMVTGDNVNTARAIATKCGILTPKDDFLCLEGKEFNSLIRNEKGEVEQEKLDKIWPKLRVLARSSPTDKHTLVKGIIDSTAGEQRQVVAVTGDGTNDGPALKKADVGFAMGIAGTDVAKEASDIILTDDNFTSIVKAVMWGRNVYDSISKFLQFQLTVNVVAVIVAFTGACITQDSPLKAVQMLWVNLIMDTFASLALATEPPTESLLRRRPYGRNKPLISRTMMKNILGHAVYQLLIVFLLVFAGDTLFDIDSGRKAPLNSPPSQHYTIVFNTFVLMQLFNEINARKIHGEKNVFAGVYRNIIFCTVVLGTFFCQIMIVELGGKPFSCTSLTMEQWMWCLFIGIGELLWGQVISAIPTKSLKFLKEAGHGSDKEDISRDTEGMDEIDLAEMELRRGQILWVRGLNRIQTQIRVVKLFHNNHEVAHKPKNRSSIHTFMTQPEYPADDELSQSFLDIQEGNPELVSKAGTSVLLLDGEAASHDNINNNAVDCHQVQIVASHSDSPLPSLETPV.

The Cytoplasmic portion of the chain corresponds to 1-100 (MTNPPGQSVS…KTFLELVWEA (100 aa)). Residues 101 to 121 (LQDVTLIILEIAAIISLVLSF) form a helical membrane-spanning segment. The Extracellular segment spans residues 122-147 (YRPPGGDNEICGHIASSPEEEEEGET). A helical membrane pass occupies residues 148 to 168 (GWIEGAAILASVIIVVLVTAF). Topologically, residues 169 to 369 (NDWSKEKQFR…LAVQIGKAGL (201 aa)) are cytoplasmic. Residues 294–318 (DDDDKKKKGKKQGAPENRNKAKTQD) are disordered. Residues serine 329 and serine 335 each carry the phosphoserine modification. Residues 370–390 (IMSVLTVVILILYFVVDNFVI) form a helical membrane-spanning segment. At 391 to 409 (QRREWLPECTPVYIQYFVK) the chain is on the extracellular side. The helical transmembrane segment at 410–430 (FFIIGVTVLVVAVPEGLPLAV) threads the bilayer. The Cytoplasmic portion of the chain corresponds to 431–844 (TISLAYSVKK…RNVYDSISKF (414 aa)). Aspartate 466 (4-aspartylphosphate intermediate) is an active-site residue. Mg(2+)-binding residues include aspartate 786 and aspartate 790. A helical transmembrane segment spans residues 845–865 (LQFQLTVNVVAVIVAFTGACI). The Extracellular portion of the chain corresponds to 866–872 (TQDSPLK). The chain crosses the membrane as a helical span at residues 873–893 (AVQMLWVNLIMDTFASLALAT). The Cytoplasmic segment spans residues 894–919 (EPPTESLLRRRPYGRNKPLISRTMMK). A helical membrane pass occupies residues 920-942 (NILGHAVYQLLIVFLLVFAGDTL). Over 943–956 (FDIDSGRKAPLNSP) the chain is Extracellular. Residues 957–979 (PSQHYTIVFNTFVLMQLFNEINA) traverse the membrane as a helical segment. The Cytoplasmic portion of the chain corresponds to 980–995 (RKIHGEKNVFAGVYRN). The chain crosses the membrane as a helical span at residues 996–1016 (IIFCTVVLGTFFCQIMIVELG). Topologically, residues 1017–1029 (GKPFSCTSLTMEQ) are extracellular. The helical transmembrane segment at 1030-1050 (WMWCLFIGIGELLWGQVISAI) threads the bilayer. At 1051-1205 (PTKSLKFLKE…SPLPSLETPV (155 aa)) the chain is on the cytoplasmic side. Serine 1065 and serine 1071 each carry phosphoserine. Residue arginine 1072 is modified to Omega-N-methylarginine. The calmodulin-binding subdomain A stretch occupies residues 1087–1104 (LRRGQILWVRGLNRIQTQ). Threonine 1103 is subject to Phosphothreonine; by PKC. The calmodulin-binding subdomain B stretch occupies residues 1105–1114 (IRVVKLFHNN). Serine 1145 is subject to Phosphoserine.

The protein belongs to the cation transport ATPase (P-type) (TC 3.A.3) family. Type IIB subfamily. As to quaternary structure, interacts with PDZD11. Interacts with SLC35G1 and STIM1. Interacts with calmodulin. In terms of tissue distribution, specifically expressed by sperm in testis (at protein level).

Its subcellular location is the membrane. It localises to the cell projection. It is found in the cilium. The protein resides in the flagellum membrane. It carries out the reaction Ca(2+)(in) + ATP + H2O = Ca(2+)(out) + ADP + phosphate + H(+). With respect to regulation, activated by calcium/calmodulin. Functionally, calcium/calmodulin-regulated and magnesium-dependent enzyme that catalyzes the hydrolysis of ATP coupled with the transport of calcium out of the cell. By regulating sperm cell calcium homeostasis, may play a role in sperm motility. The chain is Plasma membrane calcium-transporting ATPase 4 from Mus musculus (Mouse).